The chain runs to 270 residues: 4-hydroxy-tetrahydrodipicolinate reductase (270 aa).

NAD(+)-binding positions include 11 to 16 (GCNGRM) and E37. R38 is an NADP(+) binding site. Residues 101–103 (GTT) and 125–128 (ASNY) each bind NAD(+). The active-site Proton donor/acceptor is H158. H159 provides a ligand contact to (S)-2,3,4,5-tetrahydrodipicolinate. K162 acts as the Proton donor in catalysis. 168–169 (GT) is a binding site for (S)-2,3,4,5-tetrahydrodipicolinate.

It belongs to the DapB family.

The protein localises to the cytoplasm. The catalysed reaction is (S)-2,3,4,5-tetrahydrodipicolinate + NAD(+) + H2O = (2S,4S)-4-hydroxy-2,3,4,5-tetrahydrodipicolinate + NADH + H(+). The enzyme catalyses (S)-2,3,4,5-tetrahydrodipicolinate + NADP(+) + H2O = (2S,4S)-4-hydroxy-2,3,4,5-tetrahydrodipicolinate + NADPH + H(+). It functions in the pathway amino-acid biosynthesis; L-lysine biosynthesis via DAP pathway; (S)-tetrahydrodipicolinate from L-aspartate: step 4/4. Its function is as follows. Catalyzes the conversion of 4-hydroxy-tetrahydrodipicolinate (HTPA) to tetrahydrodipicolinate. This Aeromonas salmonicida (strain A449) protein is 4-hydroxy-tetrahydrodipicolinate reductase.